Here is a 45-residue protein sequence, read N- to C-terminus: Photosystem II reaction center protein K (45 aa).

A propeptide spanning residues 1-8 is cleaved from the precursor; sequence MELAMLLA. Residues 24-44 traverse the membrane as a helical segment; it reads LPVIPVFFLLLAFVWQAAVGF.

This sequence belongs to the PsbK family. PSII is composed of 1 copy each of membrane proteins PsbA, PsbB, PsbC, PsbD, PsbE, PsbF, PsbH, PsbI, PsbJ, PsbK, PsbL, PsbM, PsbT, PsbX, PsbY, PsbZ, Psb30/Ycf12, peripheral proteins PsbO, CyanoQ (PsbQ), PsbU, PsbV and a large number of cofactors. It forms dimeric complexes.

The protein localises to the cellular thylakoid membrane. In terms of biological role, one of the components of the core complex of photosystem II (PSII). PSII is a light-driven water:plastoquinone oxidoreductase that uses light energy to abstract electrons from H(2)O, generating O(2) and a proton gradient subsequently used for ATP formation. It consists of a core antenna complex that captures photons, and an electron transfer chain that converts photonic excitation into a charge separation. This chain is Photosystem II reaction center protein K, found in Trichodesmium erythraeum (strain IMS101).